The chain runs to 121 residues: Flagellar protein FliT (121 aa).

A required for homodimerization region spans residues 1-50 (MNHAPHLYFAWQQLVEKSQLMLRLATEEQWDELIASEMAYVNAVQEIAHL). The segment at 60–98 (MQEQLRPMLRLILDNESKVKQLLQIRMDELAKLVGQSSV) is fliD binding.

The protein belongs to the FliT family. As to quaternary structure, homodimer. Interacts with FliD and FlhC.

It is found in the cytoplasm. The protein resides in the cytosol. Functionally, dual-function protein that regulates the transcription of class 2 flagellar operons and that also acts as an export chaperone for the filament-capping protein FliD. As a transcriptional regulator, acts as an anti-FlhDC factor; it directly binds FlhC, thus inhibiting the binding of the FlhC/FlhD complex to class 2 promoters, resulting in decreased expression of class 2 flagellar operons. As a chaperone, effects FliD transition to the membrane by preventing its premature polymerization, and by directing it to the export apparatus. The protein is Flagellar protein FliT of Escherichia coli O8 (strain IAI1).